Here is a 756-residue protein sequence, read N- to C-terminus: Serine/threonine-protein kinase tousled-like 1-B (756 aa).

Low complexity-rich tracts occupy residues 1–12 (MSVQSNSNSSGS) and 23–34 (STGSPTPGSVSP). 2 disordered regions span residues 1–56 (MSVQ…LDPR) and 69–185 (VSGN…QNSS). Over residues 45-56 (EGMDELHSLDPR) the composition is skewed to basic and acidic residues. Residues 72-85 (NTGGSTGSASGGPK) are compositionally biased toward gly residues. The segment covering 93 to 103 (SSHSFGSLGSS) has biased composition (low complexity). The span at 104–120 (SDKESETPEKKHFESSR) shows a compositional bias: basic and acidic residues. Positions 243 to 268 (DLRRQIDEQQKLLERFKERLNKCTTM) form a coiled coil. The interval 339 to 375 (KLLAKRKPSSTPSSQSPTPNESKQRKTKAVNGADNDP) is disordered. Positions 347–357 (SSTPSSQSPTP) are enriched in low complexity. A coiled-coil region spans residues 397–435 (FKLRLGHLKKEEAEIQAELERLERVRNLHIRELKRINNE). One can recognise a Protein kinase domain in the interval 450-728 (YLLLHLLGRG…VHQLGSDSYL (279 aa)). Residues 456–464 (LGRGGFSEV) and Lys479 each bind ATP. Asp580 acts as the Proton acceptor in catalysis. The segment at 734–756 (RSNSSGNLQATPASPAPSGIISY) is disordered. The span at 735–745 (SNSSGNLQATP) shows a compositional bias: polar residues.

Belongs to the protein kinase superfamily. Ser/Thr protein kinase family. Mg(2+) is required as a cofactor.

The protein localises to the nucleus. The enzyme catalyses L-seryl-[protein] + ATP = O-phospho-L-seryl-[protein] + ADP + H(+). The catalysed reaction is L-threonyl-[protein] + ATP = O-phospho-L-threonyl-[protein] + ADP + H(+). This is Serine/threonine-protein kinase tousled-like 1-B (tlk1b) from Danio rerio (Zebrafish).